The sequence spans 557 residues: Urocanate hydratase (557 aa).

NAD(+)-binding positions include 53–54 (GG), Gln131, 177–179 (GMG), Glu197, Arg202, 243–244 (NA), 264–268 (QTSAH), 274–275 (YL), and Tyr323. The active site involves Cys411. Gly493 is an NAD(+) binding site.

The protein belongs to the urocanase family. Requires NAD(+) as cofactor.

The protein localises to the cytoplasm. The catalysed reaction is 4-imidazolone-5-propanoate = trans-urocanate + H2O. It participates in amino-acid degradation; L-histidine degradation into L-glutamate; N-formimidoyl-L-glutamate from L-histidine: step 2/3. Its function is as follows. Catalyzes the conversion of urocanate to 4-imidazolone-5-propionate. The chain is Urocanate hydratase from Pseudomonas putida (strain ATCC 700007 / DSM 6899 / JCM 31910 / BCRC 17059 / LMG 24140 / F1).